A 474-amino-acid polypeptide reads, in one-letter code: Proline--tRNA ligase (474 aa).

This sequence belongs to the class-II aminoacyl-tRNA synthetase family. ProS type 3 subfamily. As to quaternary structure, homodimer.

It localises to the cytoplasm. The enzyme catalyses tRNA(Pro) + L-proline + ATP = L-prolyl-tRNA(Pro) + AMP + diphosphate. In terms of biological role, catalyzes the attachment of proline to tRNA(Pro) in a two-step reaction: proline is first activated by ATP to form Pro-AMP and then transferred to the acceptor end of tRNA(Pro). This chain is Proline--tRNA ligase, found in Mycoplasma mycoides subsp. mycoides SC (strain CCUG 32753 / NCTC 10114 / PG1).